The following is a 444-amino-acid chain: DNA primase DnaG (444 aa).

The Toprim domain occupies 173–250 (DAILIVEGRS…YVTRAPRGLE (78 aa)). The Mg(2+) site is built by E179, D221, and D223. The disordered stretch occupies residues 302–354 (VTSSVNKTDKYSQKNESKQFKQQKNENKQVKDNSKEKTQKSTEKHNETEETHL). Residues 308-354 (KTDKYSQKNESKQFKQQKNENKQVKDNSKEKTQKSTEKHNETEETHL) show a composition bias toward basic and acidic residues.

This sequence belongs to the archaeal DnaG primase family. In terms of assembly, forms a ternary complex with MCM helicase and DNA. Component of the archaeal exosome complex. It depends on Mg(2+) as a cofactor.

The enzyme catalyses ssDNA + n NTP = ssDNA/pppN(pN)n-1 hybrid + (n-1) diphosphate.. RNA polymerase that catalyzes the synthesis of short RNA molecules used as primers for DNA polymerase during DNA replication. Also part of the exosome, which is a complex involved in RNA degradation. Acts as a poly(A)-binding protein that enhances the interaction between heteromeric, adenine-rich transcripts and the exosome. The sequence is that of DNA primase DnaG from Methanosphaera stadtmanae (strain ATCC 43021 / DSM 3091 / JCM 11832 / MCB-3).